The primary structure comprises 157 residues: SsrA-binding protein (157 aa).

The disordered stretch occupies residues 130–157 (HDKRQDMAKKDSQRRIQKELGQRQKGME). Basic and acidic residues predominate over residues 132–157 (KRQDMAKKDSQRRIQKELGQRQKGME).

This sequence belongs to the SmpB family.

It is found in the cytoplasm. Required for rescue of stalled ribosomes mediated by trans-translation. Binds to transfer-messenger RNA (tmRNA), required for stable association of tmRNA with ribosomes. tmRNA and SmpB together mimic tRNA shape, replacing the anticodon stem-loop with SmpB. tmRNA is encoded by the ssrA gene; the 2 termini fold to resemble tRNA(Ala) and it encodes a 'tag peptide', a short internal open reading frame. During trans-translation Ala-aminoacylated tmRNA acts like a tRNA, entering the A-site of stalled ribosomes, displacing the stalled mRNA. The ribosome then switches to translate the ORF on the tmRNA; the nascent peptide is terminated with the 'tag peptide' encoded by the tmRNA and targeted for degradation. The ribosome is freed to recommence translation, which seems to be the essential function of trans-translation. This is SsrA-binding protein from Alkaliphilus metalliredigens (strain QYMF).